The sequence spans 135 residues: Small ribosomal subunit protein uS17 (135 aa).

The disordered stretch occupies residues 1–59 (MAEAKTGAKAAPRVAKAAKAAPKKAAPNDAEAIGAANAANVKGPKHTPRTPKPRGRRKT). Low complexity predominate over residues 8–42 (AKAAPRVAKAAKAAPKKAAPNDAEAIGAANAANVK). Residues 43–59 (GPKHTPRTPKPRGRRKT) show a composition bias toward basic residues.

The protein belongs to the universal ribosomal protein uS17 family. In terms of assembly, part of the 30S ribosomal subunit.

One of the primary rRNA binding proteins, it binds specifically to the 5'-end of 16S ribosomal RNA. The sequence is that of Small ribosomal subunit protein uS17 from Mycobacterium bovis (strain ATCC BAA-935 / AF2122/97).